The following is a 589-amino-acid chain: Transcription factor atf-6 homolog (589 aa).

The span at 1 to 16 (MNFDNTVHESNFDDLL) shows a compositional bias: basic and acidic residues. The interval 1–82 (MNFDNTVHES…SSPPLSCANF (82 aa)) is disordered. Composition is skewed to low complexity over residues 36-54 (GTDE…FSDQ) and 67-78 (GDSSSDSSPPLS). A bZIP domain is found at 250-299 (QNRKIRNRMYAQASRMRKKEADEHMKMNLQELLQENEILRTENAALKQRL). The basic motif stretch occupies residues 252–275 (RKIRNRMYAQASRMRKKEADEHMK). Residues 271 to 305 (DEHMKMNLQELLQENEILRTENAALKQRLAFFEHE) adopt a coiled-coil conformation. The segment at 281 to 295 (LLQENEILRTENAAL) is leucine-zipper. A helical membrane pass occupies residues 324–344 (IIAAGSVLMMFGLFAVISPFN).

The protein belongs to the bZIP family. ATF subfamily.

It is found in the nucleus. The protein localises to the membrane. Functionally, transcription factor. Plays a role in the unfolded protein response (UPR), perhaps mainly during constitutive endoplasmic reticulum (ER) stress, by activating transcription of genes involved in the UPR. Plays a role in modulating lifespan, acting by positively regulating expression of calcium-binding chaperone crt-1, thereby influencing ER calcium homeostasis. By activating the UPR pathway, confers adaptive protection to subsequent exposure to hypoxia. Involved in protection against proteotoxicity, probably acting via the UPR. Probably acts in the UPR in parallel with the ire-1-xbp-1 and pek-1 pathways. May be regulated by endopeptidase S2P-mediated proteolytic cleavage. This chain is Transcription factor atf-6 homolog, found in Caenorhabditis elegans.